Reading from the N-terminus, the 665-residue chain is Zinc finger CCCH domain-containing protein 45 (665 aa).

Positions 1–55 are disordered; that stretch reads MDDGDLSFDFEGGLDQPPAGGGGGPAPHSSDPGGVGGGGGGGGPGDGGGHGRGRG. Positions 33-50 are enriched in gly residues; that stretch reads GGVGGGGGGGGPGDGGGH. 3 consecutive C3H1-type zinc fingers follow at residues 58 to 85, 86 to 113, and 114 to 139; these read SYRQTVCRHWLRGLCMKGEACGFLHQFD, KARMPVCRFFRDFGECREPDCAYKHSYD, and DVKECNMYKMGFCPNGPNCRYKHVKL. The tract at residues 167 to 256 is disordered; the sequence is HNNYNQQGER…QATRIATPLP (90 aa). Polar residues predominate over residues 169–200; the sequence is NYNQQGERPQHPQGSGLPNQNSIDNTTTTTAQ. Residues 205 to 238 are compositionally biased toward low complexity; sequence QQAQTTNQQPPQQQQQQQQQQQQQQKPNTNDQVQ. Polar residues predominate over residues 239–250; the sequence is SVPNGSSNQATR. The YTH domain maps to 260 to 395; sequence SRYFIVKSCN…FIGEQLASLL (136 aa). The stretch at 432 to 459 forms a coiled coil; the sequence is DIVLFDDNEEEEEEESEEEEEGNGQESQ. The span at 439-454 shows a compositional bias: acidic residues; it reads NEEEEEEESEEEEEGN. Disordered regions lie at residues 439-469 and 561-665; these read NEEEEEEESEEEEEGNGQESQGRGRGRGMMW and GPLM…SRKR. The span at 561–573 shows a compositional bias: gly residues; sequence GPLMGGLGMGGPG. Basic and acidic residues predominate over residues 596-623; the sequence is TKREQRRPGGERGDRYETTSDQGSRGHD.

The chain is Zinc finger CCCH domain-containing protein 45 from Oryza sativa subsp. japonica (Rice).